Consider the following 145-residue polypeptide: Basic phospholipase A2 textilotoxin A chain (145 aa).

An N-terminal signal peptide occupies residues 1 to 19; sequence MHPAHLLVLLGVCVSLLGA. A propeptide spanning residues 20-27 is cleaved from the precursor; sequence SDIPPLPL. 7 cysteine pairs are disulfide-bonded: Cys-38–Cys-98, Cys-54–Cys-144, Cys-56–Cys-72, Cys-71–Cys-125, Cys-78–Cys-118, Cys-87–Cys-111, and Cys-105–Cys-116. 3 residues coordinate Ca(2+): Tyr-55, Gly-57, and Gly-59. His-75 is an active-site residue. Asp-76 provides a ligand contact to Ca(2+). The active site involves Asp-119.

This sequence belongs to the phospholipase A2 family. Group I subfamily. D49 sub-subfamily. Heterohexamer. 2 forms exist: 2 A or 2 B chains, 2 C chains and 2 covalently-linked D chains, and 1 A or 1 B, 1 C, 2 covalently-linked D chains and 2 differentially glycosylated covalently-linked D chains. Textilotoxin was originally described as pentameric. Requires Ca(2+) as cofactor. As to expression, expressed by the venom gland.

The protein resides in the secreted. It carries out the reaction a 1,2-diacyl-sn-glycero-3-phosphocholine + H2O = a 1-acyl-sn-glycero-3-phosphocholine + a fatty acid + H(+). Snake venom oligomeric phospholipase A2 that has potent presynaptic neurotoxicity. Chain A possesses a very low toxicity, but is essential for neurotoxicity. Possesses a low enzymatic activity. PLA2 catalyzes the calcium-dependent hydrolysis of the 2-acyl groups in 3-sn-phosphoglycerides. This is Basic phospholipase A2 textilotoxin A chain from Pseudonaja textilis (Eastern brown snake).